The following is a 431-amino-acid chain: Enolase (431 aa).

Glutamine 167 lines the (2R)-2-phosphoglycerate pocket. The Proton donor role is filled by glutamate 209. Aspartate 246, glutamate 290, and aspartate 317 together coordinate Mg(2+). (2R)-2-phosphoglycerate-binding residues include lysine 342, arginine 371, serine 372, and lysine 393. Lysine 342 acts as the Proton acceptor in catalysis.

The protein belongs to the enolase family. Component of the RNA degradosome, a multiprotein complex involved in RNA processing and mRNA degradation. Requires Mg(2+) as cofactor.

It localises to the cytoplasm. The protein resides in the secreted. Its subcellular location is the cell surface. The catalysed reaction is (2R)-2-phosphoglycerate = phosphoenolpyruvate + H2O. Its pathway is carbohydrate degradation; glycolysis; pyruvate from D-glyceraldehyde 3-phosphate: step 4/5. Catalyzes the reversible conversion of 2-phosphoglycerate (2-PG) into phosphoenolpyruvate (PEP). It is essential for the degradation of carbohydrates via glycolysis. The chain is Enolase from Enterobacter sp. (strain 638).